We begin with the raw amino-acid sequence, 481 residues long: Thiol protease (481 aa).

Residues 169–481 enclose the Calpain catalytic domain; that stretch reads DLREQALSST…ENFWYIAYMY (313 aa). Active-site residues include Cys229, His406, and Asn426.

Belongs to the peptidase C2 family.

With respect to regulation, inactive below 20 degrees Celsius and pH 6.0. Inhibited by divalent cations. Thiol protease. Probably an important virulence factor. The polypeptide is Thiol protease (tpr) (Porphyromonas gingivalis (strain ATCC BAA-308 / W83)).